A 557-amino-acid chain; its full sequence is Dihydroxy-acid dehydratase (557 aa).

Asp-78 is a Mg(2+) binding site. Cys-119 is a [2Fe-2S] cluster binding site. Residues Asp-120 and Lys-121 each coordinate Mg(2+). N6-carboxylysine is present on Lys-121. Cys-192 serves as a coordination point for [2Fe-2S] cluster. Glu-442 contributes to the Mg(2+) binding site. Ser-468 functions as the Proton acceptor in the catalytic mechanism.

This sequence belongs to the IlvD/Edd family. Homodimer. It depends on [2Fe-2S] cluster as a cofactor. Requires Mg(2+) as cofactor.

It catalyses the reaction (2R)-2,3-dihydroxy-3-methylbutanoate = 3-methyl-2-oxobutanoate + H2O. The enzyme catalyses (2R,3R)-2,3-dihydroxy-3-methylpentanoate = (S)-3-methyl-2-oxopentanoate + H2O. It participates in amino-acid biosynthesis; L-isoleucine biosynthesis; L-isoleucine from 2-oxobutanoate: step 3/4. The protein operates within amino-acid biosynthesis; L-valine biosynthesis; L-valine from pyruvate: step 3/4. Functionally, functions in the biosynthesis of branched-chain amino acids. Catalyzes the dehydration of (2R,3R)-2,3-dihydroxy-3-methylpentanoate (2,3-dihydroxy-3-methylvalerate) into 2-oxo-3-methylpentanoate (2-oxo-3-methylvalerate) and of (2R)-2,3-dihydroxy-3-methylbutanoate (2,3-dihydroxyisovalerate) into 2-oxo-3-methylbutanoate (2-oxoisovalerate), the penultimate precursor to L-isoleucine and L-valine, respectively. The polypeptide is Dihydroxy-acid dehydratase (Bacillus cereus (strain ATCC 10987 / NRS 248)).